A 279-amino-acid polypeptide reads, in one-letter code: Urease accessory protein UreD (279 aa).

It belongs to the UreD family. In terms of assembly, ureD, UreF and UreG form a complex that acts as a GTP-hydrolysis-dependent molecular chaperone, activating the urease apoprotein by helping to assemble the nickel containing metallocenter of UreC. The UreE protein probably delivers the nickel.

Its subcellular location is the cytoplasm. Required for maturation of urease via the functional incorporation of the urease nickel metallocenter. The sequence is that of Urease accessory protein UreD from Streptococcus salivarius (strain 57.I).